The primary structure comprises 427 residues: Ribosome biogenesis protein WDR12 homolog (427 aa).

Positions 13–97 are ubiquitin-like (UBL) domain; the sequence is LQLHLYTKQK…EDTVELEYVE (85 aa). WD repeat units lie at residues 109 to 146, 148 to 190, 197 to 236, 260 to 298, 301 to 339, 345 to 385, and 389 to 427; these read LHDD…KLTI, GHIA…NSVE, GHER…DGDS, GHRE…IKSE, GHKS…GTIV, GHTQ…APIF, and GHED…GEQK.

This sequence belongs to the WD repeat WDR12/YTM1 family.

Its subcellular location is the nucleus. It localises to the nucleolus. It is found in the nucleoplasm. In terms of biological role, required for maturation of ribosomal RNAs and formation of the large ribosomal subunit. This is Ribosome biogenesis protein WDR12 homolog from Aedes aegypti (Yellowfever mosquito).